The chain runs to 367 residues: Succinyl-diaminopimelate desuccinylase (367 aa).

His-67 provides a ligand contact to Zn(2+). Residue Asp-69 is part of the active site. Asp-98 is a binding site for Zn(2+). Catalysis depends on Glu-128, which acts as the Proton acceptor. Zn(2+)-binding residues include Glu-129, Glu-157, and His-342.

This sequence belongs to the peptidase M20A family. DapE subfamily. Homodimer. Requires Zn(2+) as cofactor. Co(2+) serves as cofactor.

It catalyses the reaction N-succinyl-(2S,6S)-2,6-diaminopimelate + H2O = (2S,6S)-2,6-diaminopimelate + succinate. The protein operates within amino-acid biosynthesis; L-lysine biosynthesis via DAP pathway; LL-2,6-diaminopimelate from (S)-tetrahydrodipicolinate (succinylase route): step 3/3. In terms of biological role, catalyzes the hydrolysis of N-succinyl-L,L-diaminopimelic acid (SDAP), forming succinate and LL-2,6-diaminopimelate (DAP), an intermediate involved in the bacterial biosynthesis of lysine and meso-diaminopimelic acid, an essential component of bacterial cell walls. The polypeptide is Succinyl-diaminopimelate desuccinylase (Campylobacter hominis (strain ATCC BAA-381 / DSM 21671 / CCUG 45161 / LMG 19568 / NCTC 13146 / CH001A)).